Consider the following 407-residue polypeptide: Na(+)-translocating NADH-quinone reductase subunit F (407 aa).

A helical transmembrane segment spans residues 3–23 (IILGVVMFTLIVLALTVMILF). The 2Fe-2S ferredoxin-type domain maps to 32–126 (GDITVEINED…NLKIELPEEI (95 aa)). The [2Fe-2S] cluster site is built by C69, C75, C78, and C110. Positions 129–269 (VKKWTCEVIS…SGPFGEFFAK (141 aa)) constitute an FAD-binding FR-type domain.

This sequence belongs to the NqrF family. In terms of assembly, composed of six subunits; NqrA, NqrB, NqrC, NqrD, NqrE and NqrF. Requires [2Fe-2S] cluster as cofactor. FAD is required as a cofactor.

The protein localises to the cell inner membrane. It catalyses the reaction a ubiquinone + n Na(+)(in) + NADH + H(+) = a ubiquinol + n Na(+)(out) + NAD(+). Its function is as follows. NQR complex catalyzes the reduction of ubiquinone-1 to ubiquinol by two successive reactions, coupled with the transport of Na(+) ions from the cytoplasm to the periplasm. The first step is catalyzed by NqrF, which accepts electrons from NADH and reduces ubiquinone-1 to ubisemiquinone by a one-electron transfer pathway. The polypeptide is Na(+)-translocating NADH-quinone reductase subunit F (Yersinia pseudotuberculosis serotype O:1b (strain IP 31758)).